Here is a 251-residue protein sequence, read N- to C-terminus: Ubiquinone/menaquinone biosynthesis C-methyltransferase UbiE (251 aa).

S-adenosyl-L-methionine-binding residues include threonine 74, aspartate 92, and serine 132.

This sequence belongs to the class I-like SAM-binding methyltransferase superfamily. MenG/UbiE family.

The enzyme catalyses a 2-demethylmenaquinol + S-adenosyl-L-methionine = a menaquinol + S-adenosyl-L-homocysteine + H(+). The catalysed reaction is a 2-methoxy-6-(all-trans-polyprenyl)benzene-1,4-diol + S-adenosyl-L-methionine = a 5-methoxy-2-methyl-3-(all-trans-polyprenyl)benzene-1,4-diol + S-adenosyl-L-homocysteine + H(+). The protein operates within quinol/quinone metabolism; menaquinone biosynthesis; menaquinol from 1,4-dihydroxy-2-naphthoate: step 2/2. It participates in cofactor biosynthesis; ubiquinone biosynthesis. Its function is as follows. Methyltransferase required for the conversion of demethylmenaquinol (DMKH2) to menaquinol (MKH2) and the conversion of 2-polyprenyl-6-methoxy-1,4-benzoquinol (DDMQH2) to 2-polyprenyl-3-methyl-6-methoxy-1,4-benzoquinol (DMQH2). The protein is Ubiquinone/menaquinone biosynthesis C-methyltransferase UbiE of Rubrivivax gelatinosus (strain NBRC 100245 / IL144).